A 393-amino-acid chain; its full sequence is MKLSAALLAIAAFANVASAQDCDTPATVSGYSNSALPDPFTFNDGSPVTTAEDWECRRSQILALIQGYESGAAPPEPESVTGTASGNSLSVQVSYGGKSITFNNSITYPSGTAPAEGWPVIIAYEFPSLPIPSNVATLSFQNSAMGKQDSTSSRGQGLFYDLYGSSSNASAMTAWAWGVSRIIDAIESTPDAKLNPAAVGVTGCSRNGKGALMAGALEPRVALTLPQESGSGGDACWRLSRYEEQQGSQVQTATEIVGENCWFSAGFDQYVNNLDSLPYDHHLLAALVAPRGLISYANTDYVWLSGMSSFGCMTAAHAVYEALGVPENHGFEQVGGHSHCQWPSQLDGSLNAFINKFLLGQDVSTDYFESNNQFNGVTWSESQWINWETPTLN.

A signal peptide spans 1–19 (MKLSAALLAIAAFANVASA). Pyrrolidone carboxylic acid is present on Q20. C22 and C56 form a disulfide bridge. Residues N103 and N168 are each glycosylated (N-linked (GlcNAc...) asparagine). A GXSYXG catalytic site motif motif is present at residues 203–208 (GCSRNG). 2 cysteine pairs are disulfide-bonded: C204–C340 and C236–C312. S205 serves as the catalytic Nucleophile. 4 residues coordinate substrate: K209, Q251, E259, and W303. The Proton donor/acceptor role is filled by H339.

This sequence belongs to the carbohydrate esterase 15 (CE15) family.

The protein localises to the secreted. The enzyme catalyses a 4-O-methyl-alpha-D-glucuronosyl ester derivative + H2O = 4-O-methyl-alpha-D-glucuronate derivative + an alcohol + H(+). Its function is as follows. Glucuronoyl esterase which may play a significant role in biomass degradation, as it is considered to disconnect hemicellulose from lignin through the hydrolysis of the ester bond between 4-O-methyl-D-glucuronic acid residues of glucuronoxylans and aromatic alcohols of lignin. The protein is 4-O-methyl-glucuronoyl methylesterase of Schizophyllum commune (strain H4-8 / FGSC 9210) (Split gill fungus).